Consider the following 198-residue polypeptide: Small ribosomal subunit protein uS7 (198 aa).

This sequence belongs to the universal ribosomal protein uS7 family. Part of the 30S ribosomal subunit.

In terms of biological role, one of the primary rRNA binding proteins, it binds directly to 16S rRNA where it nucleates assembly of the head domain of the 30S subunit. Is located at the subunit interface close to the decoding center. The polypeptide is Small ribosomal subunit protein uS7 (Nanoarchaeum equitans (strain Kin4-M)).